A 726-amino-acid polypeptide reads, in one-letter code: Eukaryotic translation initiation factor 3 subunit B (726 aa).

The sufficient for interaction with HCR1 and TIF32 stretch occupies residues 1-94; it reads MSAALEDIKL…LFVECASPAD (94 aa). The tract at residues 1–219 is sufficient for interaction with PIC8; it reads MSAALEDIKL…GVVMWGGPHF (219 aa). An RRM domain is found at 37 to 120; it reads QYIVVCGAPV…HRLFIYTMRD (84 aa). 7 WD repeats span residues 142 to 182, 186 to 224, 235 to 283, 331 to 374, 442 to 485, 505 to 549, and 566 to 611; these read FPTS…EESV, RKNW…RLRR, VSPS…LQST, LKVP…MSCK, ELKD…FAPE, ITDK…TDKN, and NSFP…VKEE.

This sequence belongs to the eIF-3 subunit B family. In terms of assembly, component of the eukaryotic translation initiation factor 3 (eIF-3) complex.

The protein localises to the cytoplasm. RNA-binding component of the eukaryotic translation initiation factor 3 (eIF-3) complex, which is involved in protein synthesis of a specialized repertoire of mRNAs and, together with other initiation factors, stimulates binding of mRNA and methionyl-tRNAi to the 40S ribosome. The eIF-3 complex specifically targets and initiates translation of a subset of mRNAs involved in cell proliferation. This Vanderwaltozyma polyspora (strain ATCC 22028 / DSM 70294 / BCRC 21397 / CBS 2163 / NBRC 10782 / NRRL Y-8283 / UCD 57-17) (Kluyveromyces polysporus) protein is Eukaryotic translation initiation factor 3 subunit B.